Here is a 1052-residue protein sequence, read N- to C-terminus: Fibroblast growth factor receptor homolog 2 (1052 aa).

A signal peptide spans 1–19; that stretch reads MAKVPITLVMIIAIVSAAA. Residues 20 to 600 lie on the Extracellular side of the membrane; that stretch reads DLGCDYGHHR…EIYALLHAHP (581 aa). Ig-like C2-type domains are found at residues 23–117, 124–230, and 240–340; these read CDYG…IASF, PALP…PTQL, and PMLK…RTVA. Cysteines 30 and 90 form a disulfide. Asn-99, Asn-137, Asn-175, Asn-181, Asn-249, and Asn-257 each carry an N-linked (GlcNAc...) asparagine glycan. Residues Cys-164 and Cys-217 are joined by a disulfide bond. Cys-262 and Cys-329 are oxidised to a cystine. The segment covering 358–372 has biased composition (low complexity); the sequence is TTTTTVASPIPTAST. The tract at residues 358–393 is disordered; that stretch reads TTTTTVASPIPTASTGEDNDDDVENPAAEASGGVGP. 2 Ig-like C2-type domains span residues 393–478 and 487–585; these read PPVF…FSVQ and PIIV…RVVS. A disulfide bond links Cys-416 and Cys-462. N-linked (GlcNAc...) asparagine glycans are attached at residues Asn-423, Asn-444, Asn-494, Asn-500, Asn-526, Asn-541, Asn-546, Asn-555, and Asn-576. Cysteines 507 and 566 form a disulfide. A helical membrane pass occupies residues 601–626; the sequence is LGFTLAAITIVALFLLGSAFITFMLR. The Cytoplasmic segment spans residues 627 to 1052; that stretch reads RLRREKLLKL…LRYQYTYKFN (426 aa). The 289-residue stretch at 712–1000 folds into the Protein kinase domain; the sequence is LSLGSILGEG…ELVESFDGIL (289 aa). ATP contacts are provided by residues 718-726 and Lys-748; that span reads LGEGAFGRV. Asp-864 (proton acceptor) is an active-site residue. Tyr-895 is modified (phosphotyrosine; by autocatalysis). Positions 1017–1038 are disordered; it reads PMLETPPSSGDEDDGSDTETFR.

This sequence belongs to the protein kinase superfamily. Tyr protein kinase family. Fibroblast growth factor receptor subfamily. As to expression, during embryogenesis, expression is seen in mesoderm, endodermal precursor cells, CNS midline cells and trachea and salivary duct ectodermal cells.

It localises to the membrane. It catalyses the reaction L-tyrosyl-[protein] + ATP = O-phospho-L-tyrosyl-[protein] + ADP + H(+). May be required for patterning of muscle precursor cells: generation of mesodermal and endodermal layers, invaginations of various types of cells, and CNS formation. Essential for the ability of the migrating tracheal and midline cells to recognize external guiding cues. The protein is Fibroblast growth factor receptor homolog 2 (btl) of Drosophila melanogaster (Fruit fly).